A 170-amino-acid chain; its full sequence is ATP synthase subunit b (170 aa).

A helical transmembrane segment spans residues V22 to G41.

This sequence belongs to the ATPase B chain family. F-type ATPases have 2 components, F(1) - the catalytic core - and F(0) - the membrane proton channel. F(1) has five subunits: alpha(3), beta(3), gamma(1), delta(1), epsilon(1). F(0) has four main subunits: a(1), b(1), b'(1) and c(10-14). The alpha and beta chains form an alternating ring which encloses part of the gamma chain. F(1) is attached to F(0) by a central stalk formed by the gamma and epsilon chains, while a peripheral stalk is formed by the delta, b and b' chains.

The protein resides in the cellular thylakoid membrane. Its function is as follows. F(1)F(0) ATP synthase produces ATP from ADP in the presence of a proton or sodium gradient. F-type ATPases consist of two structural domains, F(1) containing the extramembraneous catalytic core and F(0) containing the membrane proton channel, linked together by a central stalk and a peripheral stalk. During catalysis, ATP synthesis in the catalytic domain of F(1) is coupled via a rotary mechanism of the central stalk subunits to proton translocation. Functionally, component of the F(0) channel, it forms part of the peripheral stalk, linking F(1) to F(0). The polypeptide is ATP synthase subunit b (Prochlorococcus marinus subsp. pastoris (strain CCMP1986 / NIES-2087 / MED4)).